Here is a 225-residue protein sequence, read N- to C-terminus: Probable septum site-determining protein MinC (225 aa).

Belongs to the MinC family. In terms of assembly, interacts with MinD and FtsZ.

In terms of biological role, cell division inhibitor that blocks the formation of polar Z ring septums. Rapidly oscillates between the poles of the cell to destabilize FtsZ filaments that have formed before they mature into polar Z rings. Prevents FtsZ polymerization. In Listeria welshimeri serovar 6b (strain ATCC 35897 / DSM 20650 / CCUG 15529 / CIP 8149 / NCTC 11857 / SLCC 5334 / V8), this protein is Probable septum site-determining protein MinC.